The sequence spans 703 residues: Polyribonucleotide nucleotidyltransferase (703 aa).

Mg(2+) contacts are provided by aspartate 487 and aspartate 493. The region spanning 554–613 (PKMETIKIDPDKIRDVIGKGGATIRSICEDTGASIDIDDNGTVRIYAESKLAADEAIYRI) is the KH domain. One can recognise an S1 motif domain in the interval 623–691 (GKLYRGKVER…ARGRIKLSMK (69 aa)).

This sequence belongs to the polyribonucleotide nucleotidyltransferase family. In terms of assembly, component of the RNA degradosome, which is a multiprotein complex involved in RNA processing and mRNA degradation. The cofactor is Mg(2+).

Its subcellular location is the cytoplasm. The catalysed reaction is RNA(n+1) + phosphate = RNA(n) + a ribonucleoside 5'-diphosphate. Functionally, involved in mRNA degradation. Catalyzes the phosphorolysis of single-stranded polyribonucleotides processively in the 3'- to 5'-direction. The protein is Polyribonucleotide nucleotidyltransferase of Hahella chejuensis (strain KCTC 2396).